The following is a 238-amino-acid chain: SH2 domain-containing adapter protein F (238 aa).

Disordered stretches follow at residues 1–70 (MEPY…PWEW) and 85–121 (GSEN…EPSS). The residue at position 39 (S39) is a Phosphoserine. Positions 55-66 (EDDERPPEEYDQ) are enriched in acidic residues. Y64 is modified (phosphotyrosine). Residues 138–233 (WYHGAISRTD…AEHMSLLYPV (96 aa)) enclose the SH2 domain.

In terms of assembly, interacts with phosphorylated 'Tyr-720' of PDGFRA via its SH2 domain. May become phosphorylated upon binding to PDGFRA.

Adapter protein which may play a role in the regulation of apoptosis in response to PDGF. In Mus musculus (Mouse), this protein is SH2 domain-containing adapter protein F.